Here is a 193-residue protein sequence, read N- to C-terminus: dCTP deaminase (193 aa).

DCTP-binding positions include 110-115 (RSSLAR), Asp128, 136-138 (VLE), Tyr171, Lys178, and Gln182. Glu138 serves as the catalytic Proton donor/acceptor.

Belongs to the dCTP deaminase family. Homotrimer.

It catalyses the reaction dCTP + H2O + H(+) = dUTP + NH4(+). It participates in pyrimidine metabolism; dUMP biosynthesis; dUMP from dCTP (dUTP route): step 1/2. In terms of biological role, catalyzes the deamination of dCTP to dUTP. The sequence is that of dCTP deaminase from Buchnera aphidicola subsp. Schizaphis graminum (strain Sg).